Reading from the N-terminus, the 648-residue chain is Pesticidal crystal protein Cry19Aa (648 aa).

This sequence belongs to the delta endotoxin family.

Promotes colloidosmotic lysis by binding to the midgut epithelial cells of mosquitos. The polypeptide is Pesticidal crystal protein Cry19Aa (cry19Aa) (Bacillus thuringiensis subsp. jegathesan).